Reading from the N-terminus, the 693-residue chain is IYYTFDSFFCSPRMENGVLGNALEGVHVEEEEGEKTEEESLVENNDNVDEEAREELREQVYDAMGEKEESKKTEGMSLSKPETAKEQESEMEKGGREDMDISEPTEELPEKVALTPDQLTETSEEAEGAAAPEGLNEAEVTSGKSEQEAADAEKGKSVSGTDVQEEHKEQVEEKQGEVIVRIEKPTEASEEQPGTTLGKDNTAVEVEAEPVDATAKPVDVGGHEPKEQMATSGNEPGKAVLNQQLVGQDVPPVEESPMVTTEAAEVGSEVSEKSEQEATVVSNDGAVNGLSAAGDQASVDPQPSAERVTETKGGSELEEVRAELAPSQEAKLPIEESEGAGDGVETKVAQGVTEKSPEDKVKIAANEETQEREEQMKEGEETEGSEEEDKENDKAEEETPNDSVLENKSLPENEEEEIGNLELAWDMLDLAKIIFKRQETKEAQLYAAQAHLKLGEVSVESQNYIQAVEEFQACLSLQEQYLEAHDRLLAETHYQLGLAYGYNSQYDEAVAQFSKSIEVIEKRMAVLNEQMKEAEGSSTEYEKEIEELKELLPEIREKIEDAKESQRSGNVAELALKATLVGSSTSGFTPSGGGSSVSTIASRKPADGASSSNCVTDISHLVRKKRKPEEESPRKDDAKKAKQEPEVNGGSGDAVPSGNEVSENMEEAENQTESRAAMEGTVEAGATVESTAC.

A disordered region spans residues 25–415 (GVHVEEEEGE…ENKSLPENEE (391 aa)). The tract at residues 29–40 (EEEEGEKTEEES) is histone-binding. Positions 29 to 53 (EEEEGEKTEEESLVENNDNVDEEAR) are enriched in acidic residues. Thr36 is modified (phosphothreonine). The residue at position 40 (Ser40) is a Phosphoserine. Basic and acidic residues-rich tracts occupy residues 54 to 74 (EELREQVYDAMGEKEESKKTE) and 82 to 99 (ETAKEQESEMEKGGREDM). A Phosphothreonine modification is found at Thr83. Phosphoserine occurs at positions 89 and 102. The segment at 124–157 (EEAEGAAAPEGLNEAEVTSGKSEQEAADAEKGKS) is histone-binding. Over residues 128 to 139 (GAAAPEGLNEAE) the composition is skewed to low complexity. The segment covering 145-156 (SEQEAADAEKGK) has biased composition (basic and acidic residues). Position 156 is an N6-acetyllysine (Lys156). Ser157 is subject to Phosphoserine. The segment covering 164–187 (QEEHKEQVEEKQGEVIVRIEKPTE) has biased composition (basic and acidic residues). Lys199 is subject to N6-acetyllysine. Phosphoserine occurs at positions 232, 304, 315, 327, and 356. Basic and acidic residues predominate over residues 307–322 (RVTETKGGSELEEVRA). Thr369 and Thr382 each carry phosphothreonine. The tract at residues 374-418 (EQMKEGEETEGSEEEDKENDKAEEETPNDSVLENKSLPENEEEEI) is histone-binding. Acidic residues predominate over residues 380 to 400 (EETEGSEEEDKENDKAEEETP). Phosphoserine is present on residues Ser385, Ser403, and Ser409. 2 TPR repeats span residues 448–481 (AQAHLKLGEVSVESQNYIQAVEEFQACLSLQEQY) and 490–523 (AETHYQLGLAYGYNSQYDEAVAQFSKSIEVIEKR). Residues 510–565 (VAQFSKSIEVIEKRMAVLNEQMKEAEGSSTEYEKEIEELKELLPEIREKIEDAKES) are a coiled coil. Ser568 bears the Phosphoserine mark. The segment at 583 to 693 (SSTSGFTPSG…AGATVESTAC (111 aa)) is disordered. Phosphothreonine is present on Thr589. A phosphoserine mark is found at Ser611 and Ser612. Residues 622–628 (VRKKRKP) carry the Nuclear localization signal motif. Positions 627–645 (KPEEESPRKDDAKKAKQEP) are enriched in basic and acidic residues. At Ser632 the chain carries Phosphoserine. Lys642 is covalently cross-linked (Glycyl lysine isopeptide (Lys-Gly) (interchain with G-Cter in SUMO1)). Ser651, Ser657, and Ser662 each carry phosphoserine.

It belongs to the NASP family. As to quaternary structure, binds to linker H1 histones. Interacts with histones H2A, H2B, H3 and H4. Interacts with histone H3.3. Interacts with histones H3 and H4; NASP is a histone chaperone that stabilizes and maintains a soluble pool of histone H3-H4 dimers. Interacts with ASF1A and ASF1B; the interaction is probably indirect and mediated by H3-H4. Also binds to HSP90 in the cytoplasm. This interaction stimulates binding of NASP to H1-6/H1T. Testis- and sperm-specific.

It localises to the cytoplasm. The protein resides in the nucleus. Functionally, component of the histone chaperone network. Binds and stabilizes histone H3-H4 not bound to chromatin to maintain a soluble reservoir and modulate degradation by chaperone-mediated autophagy. Required for DNA replication, normal cell cycle progression and cell proliferation. Forms a cytoplasmic complex with HSP90 and H1 linker histones and stimulates HSP90 ATPase activity. NASP and H1 histone are subsequently released from the complex and translocate to the nucleus where the histone is released for binding to DNA. This chain is Nuclear autoantigenic sperm protein (NASP), found in Oryctolagus cuniculus (Rabbit).